Consider the following 157-residue polypeptide: Probable chemoreceptor glutamine deamidase CheD (157 aa).

Belongs to the CheD family.

It catalyses the reaction L-glutaminyl-[protein] + H2O = L-glutamyl-[protein] + NH4(+). Its function is as follows. Probably deamidates glutamine residues to glutamate on methyl-accepting chemotaxis receptors (MCPs), playing an important role in chemotaxis. This Archaeoglobus fulgidus (strain ATCC 49558 / DSM 4304 / JCM 9628 / NBRC 100126 / VC-16) protein is Probable chemoreceptor glutamine deamidase CheD.